The primary structure comprises 77 residues: Acyl carrier protein (77 aa).

The region spanning 2 to 77 is the Carrier domain; the sequence is STVEERVKKI…DAIDYILANQ (76 aa). Position 37 is an O-(pantetheine 4'-phosphoryl)serine (Ser37).

The protein belongs to the acyl carrier protein (ACP) family. Post-translationally, 4'-phosphopantetheine is transferred from CoA to a specific serine of apo-ACP by AcpS. This modification is essential for activity because fatty acids are bound in thioester linkage to the sulfhydryl of the prosthetic group.

It is found in the cytoplasm. It functions in the pathway lipid metabolism; fatty acid biosynthesis. In terms of biological role, carrier of the growing fatty acid chain in fatty acid biosynthesis. The sequence is that of Acyl carrier protein from Hahella chejuensis (strain KCTC 2396).